The following is an 81-amino-acid chain: Putative membrane protein insertion efficiency factor (81 aa).

The disordered stretch occupies residues 61 to 81 (NDGGYDPVPPAPSSRTSSIAE).

The protein belongs to the UPF0161 family.

It localises to the cell inner membrane. Its function is as follows. Could be involved in insertion of integral membrane proteins into the membrane. The sequence is that of Putative membrane protein insertion efficiency factor from Pseudomonas putida (strain ATCC 47054 / DSM 6125 / CFBP 8728 / NCIMB 11950 / KT2440).